A 75-amino-acid polypeptide reads, in one-letter code: UPF0150 protein TM_1313 (75 aa).

It belongs to the UPF0150 family.

This is UPF0150 protein TM_1313 from Thermotoga maritima (strain ATCC 43589 / DSM 3109 / JCM 10099 / NBRC 100826 / MSB8).